The following is a 342-amino-acid chain: Polycomb group RING finger protein 2 (342 aa).

An RING-type zinc finger spans residues 18 to 57; it reads CALCGGYFIDATTIVECLHSFCKTCIVRYLETNKYCPMCD. Residues K51 and K88 each participate in a glycyl lysine isopeptide (Lys-Gly) (interchain with G-Cter in SUMO2) cross-link. Positions 81-95 match the Nuclear localization signal motif; sequence KLVPGLFKDEMKRRR. Phosphothreonine; by PKA is present on T237. Positions 237–342 are disordered; sequence TLPTVPTPSE…MTVNGAPCPP (106 aa). The segment covering 243 to 253 has biased composition (polar residues); it reads TPSEGTNTSGA. A compositionally biased stretch (low complexity) spans 263-318; sequence APSPATLPATSSSLPSPATPSHGSPSSHGPPATHPTSPTPPSTAAGTTTATNGGTS. The span at 319–328 shows a compositional bias: polar residues; sequence NCLQTPSSTS. T334 is modified (phosphothreonine; by PKA).

Exists as both a monomer and homodimer. Component of a PRC1-like complex. Interacts with CBX8, RING1 and RNF2. Interacts with CBX7. Interacts with PHC2. Phosphorylated. Homodimer formation is regulated by phosphorylation with only unphosphorylated proteins forming homodimers. In terms of tissue distribution, expressed in embryonic stem cells. Expressed in a variety of tumor cells and in neural tissues.

The protein resides in the nucleus. Functionally, transcriptional repressor. Binds specifically to the DNA sequence 5'-GACTNGACT-3'. Has tumor suppressor activity. May play a role in control of cell proliferation and/or neural cell development. Regulates proliferation of early T progenitor cells by maintaining expression of HES1. Also plays a role in antero-posterior specification of the axial skeleton and negative regulation of the self-renewal activity of hematopoietic stem cells. Component of a Polycomb group (PcG) multiprotein PRC1-like complex, a complex class required to maintain the transcriptionally repressive state of many genes, including Hox genes, throughout development. PcG PRC1 complex acts via chromatin remodeling and modification of histones; it mediates monoubiquitination of histone H2A 'Lys-119', rendering chromatin heritably changed in its expressibility. Within the PRC1-like complex, regulates RNF2 ubiquitin ligase activity. In Mus musculus (Mouse), this protein is Polycomb group RING finger protein 2 (Pcgf2).